Consider the following 192-residue polypeptide: Phage-like element PBSX protein XkdU (192 aa).

This sequence to B.subtilis YqcA.

The polypeptide is Phage-like element PBSX protein XkdU (xkdU) (Bacillus subtilis (strain 168)).